We begin with the raw amino-acid sequence, 854 residues long: DNA mismatch repair protein MutS (854 aa).

615–622 (GPNMGGKS) lines the ATP pocket.

Belongs to the DNA mismatch repair MutS family.

This protein is involved in the repair of mismatches in DNA. It is possible that it carries out the mismatch recognition step. This protein has a weak ATPase activity. This Aliivibrio fischeri (strain MJ11) (Vibrio fischeri) protein is DNA mismatch repair protein MutS.